Reading from the N-terminus, the 209-residue chain is MATVNVLNWKKEKVGSVELAADVFETPVKKEVLHTVVQWQLAARRQGTHMTKTKGLVSGGGKKPFKQKGTGGARQGSSRSILMPGGGTAFGPQPRSYAFVLPKKVRRLGLSMALSHLQKEGKLFIVDSMASEGKTAELNKRLQAFGLKKAVLVDSVVDDKFNRASKNLPTFKYFPVEGLNVFDLLKYDAAVITKDSVAKIVDRCSLEKA.

The disordered stretch occupies residues methionine 50–alanine 89.

It belongs to the universal ribosomal protein uL4 family. In terms of assembly, part of the 50S ribosomal subunit.

Functionally, one of the primary rRNA binding proteins, this protein initially binds near the 5'-end of the 23S rRNA. It is important during the early stages of 50S assembly. It makes multiple contacts with different domains of the 23S rRNA in the assembled 50S subunit and ribosome. In terms of biological role, forms part of the polypeptide exit tunnel. This is Large ribosomal subunit protein uL4 from Bdellovibrio bacteriovorus (strain ATCC 15356 / DSM 50701 / NCIMB 9529 / HD100).